The sequence spans 162 residues: Nucleotide-binding protein AnaeK_0101 (162 aa).

Belongs to the YajQ family.

In terms of biological role, nucleotide-binding protein. The chain is Nucleotide-binding protein AnaeK_0101 from Anaeromyxobacter sp. (strain K).